The following is a 93-amino-acid chain: LSM complex subunit LSM5 (93 aa).

The Sm domain occupies 7 to 87 (LPLEVIDKTI…IAILVPGGKK (81 aa)).

The protein belongs to the snRNP Sm proteins family. In terms of assembly, component of the heptameric LSM1-LSM7 complex that forms a seven-membered ring structure with a donut shape. The LSm subunits are arranged in the order LSM1, LSM2, LSM3, LSM6, LSM5, LSM7 and LSM4. Except for LSM1, where a C-terminal helix crosses the ring structure to form additional interactions with LSM3 and LSM6, each subunit interacts only with its two neighboring subunits. The LSM1-LSM7 complex interacts with PAT1; within the complex PAT1 has direct interactions with LSM2 and LSM3. The LSM1-LSM7 complex interacts with XRN1. Component of the heptameric LSM2-LSM8 complex that forms a seven-membered ring structure with a donut shape; an RNA strand can pass through the hole in the center of the ring structure. The LSm subunits are arranged in the order LSM8, LSM2, LSM3, LSM6, LSM5, LSM7 and LSM4. Component of the spliceosome U4/U6-U5 tri-snRNP complex composed of the U4, U6 and U5 snRNAs and at least PRP3, PRP4, PRP6, PRP8, PRP18, PRP31, PRP38, SNU13, SNU23, SNU66, SNU114, SPP381, SMB1, SMD1, SMD2, SMD3, SMX2, SMX3, LSM2, LSM3, LSM4, LSM5, LSM6, LSM7, LSM8, BRR2 and DIB1. May be found in a complex comprising LSM2-LSM7 without LSM1 or LSM8; the complex associates with pre-P RNA and snoRNA SNR5.

It localises to the nucleus. The protein resides in the nucleolus. It is found in the cytoplasm. Its function is as follows. Component of LSm protein complexes, which are involved in RNA processing and may function in a chaperone-like manner. Component of the cytoplasmic LSM1-LSM7 complex which is involved in mRNA degradation by activating the decapping step. Together with PAT1, the LSM1-LSM7 complex binds to osmotic stress-activated mRNAs to attenuate the osmotic stress response, probably by limiting ribosome access to the mRNA and consequently translation. Component of the nuclear LSM2-LSM8 complex, which is involved in spliceosome assembly. The LSM2-LSM8 complex plays a role in the biogenesis of the spliceosomal U4/U6-U5 tri-snRNP complex by accelerating PRP24-mediated annealing of U4/U6 di-snRNA. The LSM2-LSM8 complex binds U6 snRNA terminating with a non-cyclic 3' phosphate group. LSM2-LSM8 is probably also involved in degradation of nuclear pre-mRNA by targeting them for decapping. LSM2-LSM8 could be involved in processing of pre-tRNAs, pre-rRNAs and U3 snoRNA, although involvement may be indirect. In a complex that probably contains LSM2-LSM7, but not LSM1 or LSM8, associates with the precursor of the RNA component of RNase P (pre-P RNA) and may be involved in maturing pre-P RNA; the complex also associates with snoRNA SNR5. This chain is LSM complex subunit LSM5 (LSM5), found in Saccharomyces cerevisiae (strain ATCC 204508 / S288c) (Baker's yeast).